Here is a 184-residue protein sequence, read N- to C-terminus: ATP synthase subunit b, chloroplastic (184 aa).

The helical transmembrane segment at 27–49 (LATNPINLSVVLGVLIFFGKGVL) threads the bilayer.

Belongs to the ATPase B chain family. As to quaternary structure, F-type ATPases have 2 components, F(1) - the catalytic core - and F(0) - the membrane proton channel. F(1) has five subunits: alpha(3), beta(3), gamma(1), delta(1), epsilon(1). F(0) has four main subunits: a(1), b(1), b'(1) and c(10-14). The alpha and beta chains form an alternating ring which encloses part of the gamma chain. F(1) is attached to F(0) by a central stalk formed by the gamma and epsilon chains, while a peripheral stalk is formed by the delta, b and b' chains.

Its subcellular location is the plastid. It localises to the chloroplast thylakoid membrane. Functionally, f(1)F(0) ATP synthase produces ATP from ADP in the presence of a proton or sodium gradient. F-type ATPases consist of two structural domains, F(1) containing the extramembraneous catalytic core and F(0) containing the membrane proton channel, linked together by a central stalk and a peripheral stalk. During catalysis, ATP synthesis in the catalytic domain of F(1) is coupled via a rotary mechanism of the central stalk subunits to proton translocation. Its function is as follows. Component of the F(0) channel, it forms part of the peripheral stalk, linking F(1) to F(0). In Platanus occidentalis (Sycamore), this protein is ATP synthase subunit b, chloroplastic.